We begin with the raw amino-acid sequence, 1174 residues long: Male determiner protein Mdmd(II) (1174 aa).

The span at 1 to 15 shows a compositional bias: basic and acidic residues; it reads MNATDAESRKPENKP. Disordered regions lie at residues 1-51, 80-109, and 136-259; these read MNAT…SGQR, KDGSNEMLPKEDSINTNHNYTTDSNEHPVE, and KQLS…LRRS. Residues 16–35 show a composition bias toward low complexity; sequence SSESSSSGSTSGSSDGEVSS. Residues 36–47 are compositionally biased toward polar residues; it reads KTYFKNNKSKVL. The segment covering 80–92 has biased composition (basic and acidic residues); the sequence is KDGSNEMLPKEDS. The segment covering 93–102 has biased composition (polar residues); it reads INTNHNYTTD. A compositionally biased stretch (low complexity) spans 138-153; it reads LSAYRSRSRSTRLSYS. The segment covering 183–200 has biased composition (basic and acidic residues); sequence HGRDSSTTKRSVSRDKDN. Basic residues predominate over residues 201-223; that stretch reads RLRRRIGSSRSHTRSHSRFRRSE. Residues 235-259 are compositionally biased toward basic and acidic residues; it reads RSQERRHERRRSMSSDYERIALRRS. Residues 348–531 form the MIF4G domain; that stretch reads KKYIHGYINK…KVLFQVRRDG (184 aa). The segment covering 597 to 608 has biased composition (low complexity); the sequence is DSDGSFGSGSNS. The interval 597–616 is disordered; sequence DSDGSFGSGSNSETALSDCD. Positions 641-757 constitute an MI domain; sequence ALRRTIYLTL…SWDVLDCIKL (117 aa). Positions 840–857 are enriched in low complexity; it reads SAPSSSSSSSLSSELSAP. Disordered stretches follow at residues 840–1045 and 1095–1133; these read SAPS…SRTK and RKDNYGNRQNHEISQRHDSEIKRRREERKKRHHEKNHSR. Positions 869–909 are enriched in basic residues; that stretch reads KKKHKGKNKKMTKKKNPSKKKEKTKKIVGKNKIAAKNKTIK. The segment covering 910 to 924 has biased composition (basic and acidic residues); the sequence is RRTDKDNSSSKDNFL. The segment covering 926–957 has biased composition (low complexity); sequence SESSSNESISLDSLSSELFAPSSYSSSESSND. Residues 963 to 1001 are compositionally biased toward basic residues; that stretch reads KHKGKNKKMTKKKNPSNKREKTKKKLSKNKKAPNKNTKK. The segment covering 1010-1020 has biased composition (low complexity); sequence SSESSISESKS. Over residues 1034–1045 the composition is skewed to basic residues; that stretch reads RKKRVTSKSRTK. The segment covering 1095–1118 has biased composition (basic and acidic residues); the sequence is RKDNYGNRQNHEISQRHDSEIKRR. A compositionally biased stretch (basic residues) spans 1119–1130; that stretch reads REERKKRHHEKN.

It belongs to the CWC22 family. In terms of assembly, component of the spliceosome C complex.

It localises to the nucleus speckle. Male determiner protein (M-factor) that controls male somatic sexual differentiation. Acts as a dominant factor that regulates the mRNA splicing of transformer (tra) and doublesex (dsx) transcripts and promotes expression of male splice forms of tra and dsx. Probably acts as a component of the spliceosome C complex required for mRNA splicing factor and exon-junction complex (EJC) assembly. Hinders eIF4AIII from non-specifically binding RNA and escorts it to the splicing machinery to promote EJC assembly on mature mRNAs. This is Male determiner protein Mdmd(II) from Musca domestica (House fly).